A 453-amino-acid polypeptide reads, in one-letter code: Ferruginol synthase (453 aa).

Residues 15 to 35 form a helical membrane-spanning segment; sequence LSKKYGPLMSIHLGSLYTVIV. Heme is bound at residue Cys397.

This sequence belongs to the cytochrome P450 family. It depends on heme as a cofactor. As to expression, expressed in leaf glandular trichomes.

The protein resides in the membrane. The catalysed reaction is abieta-8,11,13-triene + reduced [NADPH--hemoprotein reductase] + O2 = ferruginol + oxidized [NADPH--hemoprotein reductase] + H2O + H(+). It catalyses the reaction ferruginol + reduced [NADPH--hemoprotein reductase] + O2 = 11-hydroxyferruginol + oxidized [NADPH--hemoprotein reductase] + H2O + H(+). The enzyme catalyses miltiradiene + 2 reduced [NADPH--hemoprotein reductase] + 2 O2 = 11-oxomiltiradiene + 2 oxidized [NADPH--hemoprotein reductase] + 3 H2O + 2 H(+). The protein operates within secondary metabolite biosynthesis; terpenoid biosynthesis. Its function is as follows. Monooxygenase involved in the biosynthesis of labdane-related diterpenes natural products. Catalyzes the oxidation of abietatriene to produce ferruginol. Ferruginol is an intermediate in the biosynthesis of carnosate, a potent antioxidant. May also convert miltiradiene into 11-oxomiltiradiene. In Salvia pomifera (Apple sage), this protein is Ferruginol synthase.